The primary structure comprises 131 residues: Agouti-related protein (131 aa).

The signal sequence occupies residues 1 to 20 (MLTAMLLSCVLLLALPPTLG). Positions 21-81 (VQMGVAPLKG…VLDPQNRESR (61 aa)) are excised as a propeptide. Cystine bridges form between cysteine 86–cysteine 101, cysteine 93–cysteine 107, cysteine 100–cysteine 118, cysteine 104–cysteine 128, and cysteine 109–cysteine 116. In terms of domain architecture, Agouti spans 86 to 128 (CVRLHESCLGQQVPCCDPCATCYCRFFNAFCYCRKLGTATNLC). Residues 110–112 (RFF) are interaction with melanocortin receptors.

As to quaternary structure, interacts with melanocortin receptors MC3R, MC4R and MC5R. Expressed in arcuate nucleus and median eminence, adrenal gland (medulla), hypothalamus, testis, and lung.

It is found in the secreted. The protein localises to the golgi apparatus lumen. Its function is as follows. Plays a role in weight homeostasis. Involved in the control of feeding behavior through the central melanocortin system. Acts as alpha melanocyte-stimulating hormone antagonist by inhibiting cAMP production mediated by stimulation of melanocortin receptors within the hypothalamus and adrenal gland. Has very low activity with MC5R. Is an inverse agonist for MC3R and MC4R being able to suppress their constitutive activity. It promotes MC3R and MC4R endocytosis in an arrestin-dependent manner. This Mus musculus (Mouse) protein is Agouti-related protein (Agrp).